The chain runs to 101 residues: Chaperone modulatory protein CbpM (101 aa).

The protein belongs to the CbpM family.

In terms of biological role, interacts with CbpA and inhibits both the DnaJ-like co-chaperone activity and the DNA binding activity of CbpA. Together with CbpA, modulates the activity of the DnaK chaperone system. Does not inhibit the co-chaperone activity of DnaJ. This is Chaperone modulatory protein CbpM from Salmonella arizonae (strain ATCC BAA-731 / CDC346-86 / RSK2980).